The sequence spans 130 residues: Small ribosomal subunit protein uS11c (130 aa).

It belongs to the universal ribosomal protein uS11 family. As to quaternary structure, part of the 30S ribosomal subunit.

The protein localises to the plastid. It localises to the chloroplast. The sequence is that of Small ribosomal subunit protein uS11c from Stigeoclonium helveticum (Green alga).